The primary structure comprises 288 residues: Probable pectinesterase 56 (288 aa).

Positions 1–27 are cleaved as a signal peptide; the sequence is MAMTSTMQLLVLSFLVIASLFLGATVA. N-linked (GlcNAc...) asparagine glycans are attached at residues asparagine 55 and asparagine 95. Threonine 120 and glutamine 150 together coordinate substrate. Aspartate 173 serves as the catalytic Proton donor. The active-site Nucleophile is aspartate 194. Asparagine 242 carries an N-linked (GlcNAc...) asparagine glycan. Substrate-binding residues include arginine 262 and tryptophan 264.

This sequence belongs to the pectinesterase family.

Its subcellular location is the secreted. The protein localises to the cell wall. The catalysed reaction is [(1-&gt;4)-alpha-D-galacturonosyl methyl ester](n) + n H2O = [(1-&gt;4)-alpha-D-galacturonosyl](n) + n methanol + n H(+). Its pathway is glycan metabolism; pectin degradation; 2-dehydro-3-deoxy-D-gluconate from pectin: step 1/5. Functionally, acts in the modification of cell walls via demethylesterification of cell wall pectin. This chain is Probable pectinesterase 56 (PME56), found in Arabidopsis thaliana (Mouse-ear cress).